A 421-amino-acid polypeptide reads, in one-letter code: Mitochondrial tRNA-specific 2-thiouridylase 1 (421 aa).

ATP-binding positions include 10 to 17 (ALSGGVDS) and Met-36. Residues 96-98 (NPD) form an interaction with target base in tRNA region. Residue Cys-101 is the Nucleophile of the active site. Residues Cys-101 and Cys-222 are joined by a disulfide bond. ATP is bound at residue Gly-126. The interval 171-173 (KDQ) is interaction with tRNA. Cys-222 acts as the Cysteine persulfide intermediate in catalysis. The tract at residues 334–335 (RH) is interaction with tRNA. Positions 395-421 (KGQRRAGMATESPSDSPEDGPGLSPLL) are disordered.

It belongs to the MnmA/TRMU family. Ubiquitous. Abundantly expressed in tissues with high metabolic rates including heart, liver, kidney, and brain.

The protein localises to the mitochondrion. The enzyme catalyses 5-taurinomethyluridine(34) in tRNA + S-sulfanyl-L-cysteinyl-[protein] + AH2 + ATP = 5-taurinomethyl-2-thiouridine(34) in tRNA + L-cysteinyl-[protein] + A + AMP + diphosphate + H(+). Catalyzes the 2-thiolation of uridine at the wobble position (U34) of mitochondrial tRNA(Lys), tRNA(Glu) and tRNA(Gln). Required for the formation of 5-taurinomethyl-2-thiouridine (tm5s2U) of mitochondrial tRNA(Lys), tRNA(Glu), and tRNA(Gln) at the wobble position. ATP is required to activate the C2 atom of the wobble base. This chain is Mitochondrial tRNA-specific 2-thiouridylase 1 (TRMU), found in Homo sapiens (Human).